Here is a 178-residue protein sequence, read N- to C-terminus: CASP-like protein 4D1 (178 aa).

Position 2 is an N-acetylalanine (A2). Topologically, residues 2–14 are cytoplasmic; sequence APPPPAPPSVTLR. A helical transmembrane segment spans residues 15–35; the sequence is TVLLLLRVLTAAFLLITVVLI. The Extracellular portion of the chain corresponds to 36 to 60; it reads STNTVTLEISSTSIKLPFNDVYAYR. A helical transmembrane segment spans residues 61–81; the sequence is YMLSAAVIGLVYAVVQLFLTI. At 82–97 the chain is on the cytoplasmic side; sequence SQFATGKTHPLTYQFD. Residues 98-118 traverse the membrane as a helical segment; sequence FYGDKVISYLLATGSAAGFGV. Residues 119-149 are Extracellular-facing; the sequence is SKDLKDTYIALIEFDSTDPVDKFFSKGYASA. The helical transmembrane segment at 150–170 threads the bilayer; that stretch reads SLLLFAFVSLAVLSVFSSLAL. Topologically, residues 171–178 are cytoplasmic; that stretch reads SKRPVPVS.

The protein belongs to the Casparian strip membrane proteins (CASP) family. Homodimer and heterodimers. As to expression, expressed in the root epidermis.

The protein localises to the cell membrane. The protein is CASP-like protein 4D1 of Arabidopsis thaliana (Mouse-ear cress).